We begin with the raw amino-acid sequence, 61 residues long: MAKTSLKVKATRHPKYSARAYTRCQICGRPQAVLRKYKICRICFRKLAHEGKIPGMKKASW.

The Zn(2+) site is built by Cys-24, Cys-27, Cys-40, and Cys-43.

This sequence belongs to the universal ribosomal protein uS14 family. Zinc-binding uS14 subfamily. As to quaternary structure, part of the 30S ribosomal subunit. Contacts proteins S3 and S10. It depends on Zn(2+) as a cofactor.

Its function is as follows. Binds 16S rRNA, required for the assembly of 30S particles and may also be responsible for determining the conformation of the 16S rRNA at the A site. This chain is Small ribosomal subunit protein uS14, found in Mycoplasma mobile (strain ATCC 43663 / 163K / NCTC 11711) (Mesomycoplasma mobile).